Reading from the N-terminus, the 172-residue chain is C-phycocyanin-2 beta subunit (172 aa).

At Asn-72 the chain carries N4-methylasparagine. Cys-82 and Cys-153 together coordinate (2R,3E)-phycocyanobilin.

This sequence belongs to the phycobiliprotein family. Heterodimer of an alpha and a beta subunit, which further assembles into trimers and the trimers into hexamers. Contains two covalently linked bilin chromophores.

Its subcellular location is the cellular thylakoid membrane. Its function is as follows. Light-harvesting photosynthetic bile pigment-protein from the phycobiliprotein complex (phycobilisome, PBS). Phycocyanin is the major phycobiliprotein in the PBS rod. This is C-phycocyanin-2 beta subunit (cpcB2) from Pseudanabaena tenuis (strain PCC 7409).